A 109-amino-acid polypeptide reads, in one-letter code: uncharacterized protein (109 aa).

The first 28 residues, 1 to 28, serve as a signal peptide directing secretion; sequence MNMLAYFLYCRQLLLAVVLIEFPPRLCG.

This is an uncharacterized protein from Homo sapiens (Human).